A 54-amino-acid chain; its full sequence is uncharacterized protein (54 aa).

This is an uncharacterized protein from Dictyostelium discoideum (Social amoeba).